The following is a 182-amino-acid chain: Ribosome maturation factor RimM (182 aa).

The 80-residue stretch at E103–F182 folds into the PRC barrel domain.

The protein belongs to the RimM family. As to quaternary structure, binds ribosomal protein uS19.

It is found in the cytoplasm. In terms of biological role, an accessory protein needed during the final step in the assembly of 30S ribosomal subunit, possibly for assembly of the head region. Essential for efficient processing of 16S rRNA. May be needed both before and after RbfA during the maturation of 16S rRNA. It has affinity for free ribosomal 30S subunits but not for 70S ribosomes. The sequence is that of Ribosome maturation factor RimM from Vibrio parahaemolyticus serotype O3:K6 (strain RIMD 2210633).